A 717-amino-acid chain; its full sequence is Delta-like protein D (717 aa).

The signal sequence occupies residues 1–19 (MGRLMIAVLLCVMISQGFC). Topologically, residues 20 to 547 (SGVFELKLQE…EEDDGGFPWT (528 aa)) are extracellular. The DSL domain maps to 175-219 (FVCDEHYYGEGCSVFCRPRDDTFGHFTCGERGEIICNSGWKGQYC). Intrachain disulfides connect C177/C186, C190/C202, C210/C219, C224/C235, C228/C241, C243/C252, C261/C266, C274/C283, C290/C302, C296/C312, C314/C323, C330/C341, C335/C350, C352/C361, C368/C379, C373/C389, C391/C400, C407/C418, C412/C427, C429/C438, C445/C456, C450/C465, C467/C476, C483/C494, C488/C503, and C505/C514. EGF-like domains lie at 220–253 (TEPICLPGCDEDHGFCDKPGECKCRVGFSGKYCD), 257–284 (RYPGCLHGTCQQPWQCNCQEGWGGLFCN), and 286–324 (DLNYCTHHKPCQNGATCTNTGQGSYTCSCRPGFTGDSCE). Positions 326-362 (EVNECSGSPCRNGGSCTDLENTYSCTCPPGFYGRNCE) constitute an EGF-like 4; calcium-binding domain. 2 EGF-like domains span residues 364–401 (SAMTCADGPCFNGGHCADNPEGGYFCQCPMGYAGFNCE) and 403–439 (KIDHCSSNPCSNDAQCLDLVDSYLCQCPEGFTGTHCE). In terms of domain architecture, EGF-like 7; calcium-binding spans 441–477 (NIDECATYPCQNGGTCQDGLSDYTCTCPPGYTGKNCT). N475 carries an N-linked (GlcNAc...) asparagine glycan. Residues 479-515 (AVNKCLHNPCHNGATCHEMDNRYVCACIPGYGGRNCQ) enclose the EGF-like 8 domain. The chain crosses the membrane as a helical span at residues 548–568 (AVCAGIILVLLVLIGGSVFVI). The Cytoplasmic segment spans residues 569–717 (YIRLKLQQRS…KDECIIATEV (149 aa)). A disordered region spans residues 649 to 693 (EDLGKEDSERSEATKCEPLDSDSEEKHRNHLKSDSSERKRTESLC).

As to quaternary structure, interacts with mib. In terms of processing, ubiquitinated by mib, leading to its endocytosis and subsequent degradation. As to expression, expressed in both mesodermal and neuroectodermal regions. In the developing nervous system, it is expressed in overlapping regions with deltaB (dlb) and deltaA (dla); in the neural plate, dld is expressed in patches of contiguous cells with dla, while dlb is confined to scattered cells within those patches that will differentiate as neurons. In somites, it marks the anterior part of each formed somite, while deltaC (dlc) marks the posterior part. In 24 hours embryos, expressed in the hindbrain in stripes adjacent to rhombomere boundaries, but not in the actual boundary cells.

It is found in the membrane. Its function is as follows. Acts as a ligand for Notch receptors and is involved in primary neurogenesis and somitogenesis. Can activate Notch receptors, thereby playing a key role in lateral inhibition, a process that prevents the immediate neighbors of each nascent neural cell from simultaneously embarking on neural differentiation. Required in somite segmentation to keep the oscillations of neighboring presomitic mesoderm cells synchronized. The polypeptide is Delta-like protein D (dld) (Danio rerio (Zebrafish)).